The chain runs to 81 residues: Photosystem I iron-sulfur center (81 aa).

4Fe-4S ferredoxin-type domains follow at residues 2–31 (SHSVKIYDTCIGCTQCVRACPTDVLEMIPW) and 39–68 (IASAPRTEDCVGCKRCESACPTDFLSVRVY). [4Fe-4S] cluster is bound by residues C11, C14, C17, C21, C48, C51, C54, and C58.

In terms of assembly, the eukaryotic PSI reaction center is composed of at least 11 subunits. [4Fe-4S] cluster is required as a cofactor.

Its subcellular location is the plastid. It localises to the chloroplast thylakoid membrane. It catalyses the reaction reduced [plastocyanin] + hnu + oxidized [2Fe-2S]-[ferredoxin] = oxidized [plastocyanin] + reduced [2Fe-2S]-[ferredoxin]. Its function is as follows. Apoprotein for the two 4Fe-4S centers FA and FB of photosystem I (PSI); essential for photochemical activity. FB is the terminal electron acceptor of PSI, donating electrons to ferredoxin. The C-terminus interacts with PsaA/B/D and helps assemble the protein into the PSI complex. Required for binding of PsaD and PsaE to PSI. PSI is a plastocyanin-ferredoxin oxidoreductase, converting photonic excitation into a charge separation, which transfers an electron from the donor P700 chlorophyll pair to the spectroscopically characterized acceptors A0, A1, FX, FA and FB in turn. In Triticum aestivum (Wheat), this protein is Photosystem I iron-sulfur center.